The sequence spans 142 residues: MPTFNQLVRKGRKAAKKKSTAPALQKGFNSLKKVQTDISCPQKRGVCTVVKTTTPKKPNSALRKIARVRLTNGIEVTAYIPGIGHNLQEHSVVLIRGGRVKDLPGVRYHIIRGTLDAAGVAKRMQGRSKYGAKRPKSSAAAK.

The disordered stretch occupies residues 1-22 (MPTFNQLVRKGRKAAKKKSTAP). Residues 9–19 (RKGRKAAKKKS) are compositionally biased toward basic residues. Asp102 is subject to 3-methylthioaspartic acid.

This sequence belongs to the universal ribosomal protein uS12 family. Part of the 30S ribosomal subunit. Contacts proteins S8 and S17. May interact with IF1 in the 30S initiation complex.

Functionally, with S4 and S5 plays an important role in translational accuracy. Its function is as follows. Interacts with and stabilizes bases of the 16S rRNA that are involved in tRNA selection in the A site and with the mRNA backbone. Located at the interface of the 30S and 50S subunits, it traverses the body of the 30S subunit contacting proteins on the other side and probably holding the rRNA structure together. The combined cluster of proteins S8, S12 and S17 appears to hold together the shoulder and platform of the 30S subunit. This Acetivibrio thermocellus (strain ATCC 27405 / DSM 1237 / JCM 9322 / NBRC 103400 / NCIMB 10682 / NRRL B-4536 / VPI 7372) (Clostridium thermocellum) protein is Small ribosomal subunit protein uS12.